A 154-amino-acid polypeptide reads, in one-letter code: Prefoldin subunit alpha (154 aa).

A disordered region spans residues 119–154; it reads EKAEVETEMEELEQQAQQMQQQQMQQMMQQQEQEDE. Over residues 132-154 the composition is skewed to low complexity; sequence QQAQQMQQQQMQQMMQQQEQEDE.

The protein belongs to the prefoldin subunit alpha family. As to quaternary structure, heterohexamer of two alpha and four beta subunits.

Its subcellular location is the cytoplasm. Functionally, molecular chaperone capable of stabilizing a range of proteins. Seems to fulfill an ATP-independent, HSP70-like function in archaeal de novo protein folding. This Haloarcula marismortui (strain ATCC 43049 / DSM 3752 / JCM 8966 / VKM B-1809) (Halobacterium marismortui) protein is Prefoldin subunit alpha.